Reading from the N-terminus, the 371-residue chain is Pyruvate dehydrogenase E1 component subunit alpha (371 aa).

In terms of assembly, heterodimer of an alpha and a beta chain. Thiamine diphosphate is required as a cofactor.

The catalysed reaction is N(6)-[(R)-lipoyl]-L-lysyl-[protein] + pyruvate + H(+) = N(6)-[(R)-S(8)-acetyldihydrolipoyl]-L-lysyl-[protein] + CO2. In terms of biological role, the pyruvate dehydrogenase complex catalyzes the overall conversion of pyruvate to acetyl-CoA and CO(2). It contains multiple copies of three enzymatic components: pyruvate dehydrogenase (E1), dihydrolipoamide acetyltransferase (E2) and lipoamide dehydrogenase (E3). This Bacillus cereus protein is Pyruvate dehydrogenase E1 component subunit alpha.